A 349-amino-acid chain; its full sequence is Aspartate-semialdehyde dehydrogenase (349 aa).

NADP(+)-binding positions include 12–15 (TGSV) and 39–40 (NS). Residue R113 participates in phosphate binding. C148 acts as the Acyl-thioester intermediate in catalysis. Substrate is bound at residue Q175. 178 to 179 (SG) is a binding site for NADP(+). Position 201 (E201) interacts with substrate. K204 contributes to the phosphate binding site. R234 serves as a coordination point for substrate. H241 serves as the catalytic Proton acceptor. An NADP(+)-binding site is contributed by 326-327 (NT).

This sequence belongs to the aspartate-semialdehyde dehydrogenase family. As to quaternary structure, homodimer.

The catalysed reaction is L-aspartate 4-semialdehyde + phosphate + NADP(+) = 4-phospho-L-aspartate + NADPH + H(+). It participates in amino-acid biosynthesis; L-lysine biosynthesis via DAP pathway; (S)-tetrahydrodipicolinate from L-aspartate: step 2/4. It functions in the pathway amino-acid biosynthesis; L-methionine biosynthesis via de novo pathway; L-homoserine from L-aspartate: step 2/3. Its pathway is amino-acid biosynthesis; L-threonine biosynthesis; L-threonine from L-aspartate: step 2/5. Functionally, catalyzes the NADPH-dependent formation of L-aspartate-semialdehyde (L-ASA) by the reductive dephosphorylation of L-aspartyl-4-phosphate. The chain is Aspartate-semialdehyde dehydrogenase from Leptospira interrogans serogroup Icterohaemorrhagiae serovar Lai (strain 56601).